The following is a 329-amino-acid chain: Probable cell division protein WhiA (329 aa).

Positions 276-309 (SLEELGKVHEPPLTKDAIAGRIRRLLALADKTAR) form a DNA-binding region, H-T-H motif. Residues 308–329 (ARSNGEPTTLESLPVEMRDDRG) are disordered. Positions 309–318 (RSNGEPTTLE) are enriched in polar residues.

Belongs to the WhiA family.

Functionally, involved in cell division and chromosome segregation. The protein is Probable cell division protein WhiA of Cutibacterium acnes (strain DSM 16379 / KPA171202) (Propionibacterium acnes).